A 345-amino-acid chain; its full sequence is Alanine racemase (345 aa).

Lysine 33 acts as the Proton acceptor; specific for D-alanine in catalysis. Lysine 33 carries the post-translational modification N6-(pyridoxal phosphate)lysine. Residue arginine 128 participates in substrate binding. Tyrosine 242 serves as the catalytic Proton acceptor; specific for L-alanine. Position 291 (methionine 291) interacts with substrate.

Belongs to the alanine racemase family. Pyridoxal 5'-phosphate is required as a cofactor.

The enzyme catalyses L-alanine = D-alanine. It functions in the pathway amino-acid biosynthesis; D-alanine biosynthesis; D-alanine from L-alanine: step 1/1. In terms of biological role, catalyzes the interconversion of L-alanine and D-alanine. May also act on other amino acids. This chain is Alanine racemase (alr), found in Ruegeria sp. (strain TM1040) (Silicibacter sp.).